We begin with the raw amino-acid sequence, 431 residues long: Fumarylacetoacetase fahA (431 aa).

A Ca(2+)-binding site is contributed by Asp133. Residue Tyr135 coordinates substrate. The active-site Proton acceptor is His140. Arg149 is a substrate binding site. Ca(2+) is bound by residues Glu209, Glu211, and Asp243. A Mg(2+)-binding site is contributed by Asp243. Residues Gln250 and Tyr254 each contribute to the substrate site. Mg(2+) is bound by residues Lys263 and Thr267. Thr362 lines the substrate pocket. The segment covering 362-381 (TISGKENQTQGSLLEQTNGK) has biased composition (polar residues). The segment at 362–382 (TISGKENQTQGSLLEQTNGKN) is disordered.

Belongs to the FAH family. Ca(2+) serves as cofactor. It depends on Mg(2+) as a cofactor.

The catalysed reaction is 4-fumarylacetoacetate + H2O = acetoacetate + fumarate + H(+). Its pathway is amino-acid degradation; L-phenylalanine degradation; acetoacetate and fumarate from L-phenylalanine: step 6/6. Its function is as follows. Fumarylacetoacetase; part of the L-tyrosine degradation gene cluster that mediates the biosynthesis of the brownish pigment pyomelanin as an alternative melanin. The 4-hydroxyphenylpyruvate dioxygenase hppD catalyzes the conversion of 4-hydroxyphenylpyruvate to homogentisic acid (HGA). The protein hmgX is crucial for this conversion and thus, probably functions as an accessory factor to mediate specific activity of hppD. The homogentisate 1,2-dioxygenase hmgA is then involved in the cleavage of the aromatic ring of HGA and its conversion to 4-maleylacetoacetate. When hmgA activity is lowered by the cell wall integrity (CWI) signaling pathway, HGA accumulates and leads to the production of pyomelanin through benzoquinone acetic acid after oxidation and polymerization. On the opposite, in non-stress conditions, both hppD and hmgA activities are balanced and HGA is degraded into 4-maleylacetoacetate. 4-maleylacetoacetate is further converted to 4-fumarylacetoacetate by the maleylacetoacetate isomerase maiA, which is degraded into fumarate and acetoacetate by the fumarylacetoacetase fahA. The protein is Fumarylacetoacetase fahA of Aspergillus fumigatus (strain ATCC MYA-4609 / CBS 101355 / FGSC A1100 / Af293) (Neosartorya fumigata).